Consider the following 290-residue polypeptide: ADP-dependent (S)-NAD(P)H-hydrate dehydratase (290 aa).

One can recognise a YjeF C-terminal domain in the interval 5 to 278 (NQTLLEKVII…RYLPKIMKII (274 aa)). Residues alanine 40, glycine 103, and histidine 152 each contribute to the (6S)-NADPHX site. Residue glycine 218 participates in AMP binding. (6S)-NADPHX is bound at residue aspartate 219.

The protein belongs to the NnrD/CARKD family. Homotetramer. Mg(2+) is required as a cofactor.

It carries out the reaction (6S)-NADHX + ADP = AMP + phosphate + NADH + H(+). The catalysed reaction is (6S)-NADPHX + ADP = AMP + phosphate + NADPH + H(+). Functionally, catalyzes the dehydration of the S-form of NAD(P)HX at the expense of ADP, which is converted to AMP. Together with NAD(P)HX epimerase, which catalyzes the epimerization of the S- and R-forms, the enzyme allows the repair of both epimers of NAD(P)HX, a damaged form of NAD(P)H that is a result of enzymatic or heat-dependent hydration. The chain is ADP-dependent (S)-NAD(P)H-hydrate dehydratase from Streptococcus pneumoniae (strain ATCC BAA-255 / R6).